We begin with the raw amino-acid sequence, 88 residues long: Small ribosomal subunit protein bS20 (88 aa).

A disordered region spans residues 1–27 (MANTKQAQKRARQAEQRRQHNASQRSM).

The protein belongs to the bacterial ribosomal protein bS20 family.

Functionally, binds directly to 16S ribosomal RNA. This chain is Small ribosomal subunit protein bS20, found in Chromohalobacter salexigens (strain ATCC BAA-138 / DSM 3043 / CIP 106854 / NCIMB 13768 / 1H11).